Here is a 712-residue protein sequence, read N- to C-terminus: Transferrin-binding protein B (712 aa).

An N-terminal signal peptide occupies residues 1 to 20 (MNNPLVNQAAMVLPVFLLSA). Cys21 carries the N-palmitoyl cysteine lipid modification. A lipid anchor (S-diacylglycerol cysteine) is attached at Cys21. The tract at residues 59–196 (GGYGFAMRLK…YHGKEPSRQL (138 aa)) is N-terminal handle domain. Disordered stretches follow at residues 78-104 (EDEVKLDESDWEATGLPDEPKELPKRQ), 123-144 (PYLKPSNHQNGNTGNGINQPKN), 223-256 (IIQPSKSQGDRYSGFSGDDGEEYSNKNKSTLTDG), 309-338 (NGKATATDKPQQNSETKEHPFVSDSSSLSG), 364-398 (SAKTKDKPANGNTAAASGGTDAAASNGAAGTSSEN), 442-495 (ASES…GDTN), and 689-712 (NATNASGNSSATVVFGAKRQQPVR). Residues 95–104 (DEPKELPKRQ) are compositionally biased toward basic and acidic residues. Polar residues predominate over residues 128 to 144 (SNHQNGNTGNGINQPKN). The tract at residues 197-367 (PASGKITYKG…KVAVVGSAKT (171 aa)) is N-terminal beta barrel domain. 2 stretches are compositionally biased toward low complexity: residues 372–398 (ANGNTAAASGGTDAAASNGAAGTSSEN) and 446–459 (GNNQANQGTNGGTA). A C-terminal handle domain region spans residues 389 to 555 (NGAAGTSSEN…SMFLQGERTD (167 aa)). A compositionally biased stretch (basic and acidic residues) spans 462–475 (RKFDHTPESDKKDA). Composition is skewed to polar residues over residues 477-495 (AGTQTNGAQTASNTAGDTN) and 689-700 (NATNASGNSSAT). The C-terminal beta barrel domain stretch occupies residues 556 to 712 (EKEIPSEQNI…FGAKRQQPVR (157 aa)).

Belongs to the TbpB family. Isotype II subfamily. In terms of assembly, binds only human holo-transferrin (TF), via the TF C-terminus. Forms a large complex with TF and TbpA. Interacts via its C-terminal domain with Slam1.

It is found in the cell outer membrane. The protein resides in the cell surface. Functionally, neisseria acquires iron by extracting it from serum transferrin (TF) in its human host. Acts as a TF receptor and is required for TF utilization. Involved in the initial capture of TF. Helps select only those TF molecules that can be used as an iron source and concentrates them on the cell surface, maintaining the iron-loaded status of the TF C-terminal lobe until its delivery to TbpA. The polypeptide is Transferrin-binding protein B (Neisseria meningitidis serogroup B (strain ATCC BAA-335 / MC58)).